Here is a 63-residue protein sequence, read N- to C-terminus: Large ribosomal subunit protein uL30 (63 aa).

Belongs to the universal ribosomal protein uL30 family. In terms of assembly, part of the 50S ribosomal subunit.

The sequence is that of Large ribosomal subunit protein uL30 from Xylella fastidiosa (strain 9a5c).